The chain runs to 309 residues: Bifunctional methylenetetrahydrofolate dehydrogenase/cyclohydrolase, mitochondrial (309 aa).

This sequence belongs to the tetrahydrofolate dehydrogenase/cyclohydrolase family. As to quaternary structure, homodimer. Mg(2+) serves as cofactor.

The protein localises to the mitochondrion. The enzyme catalyses (6R)-5,10-methylene-5,6,7,8-tetrahydrofolate + NAD(+) = (6R)-5,10-methenyltetrahydrofolate + NADH. The catalysed reaction is (6R)-5,10-methenyltetrahydrofolate + H2O = (6R)-10-formyltetrahydrofolate + H(+). In terms of biological role, may play a role in spermatogenesis. The sequence is that of Bifunctional methylenetetrahydrofolate dehydrogenase/cyclohydrolase, mitochondrial (Nmdmc) from Drosophila melanogaster (Fruit fly).